The sequence spans 38 residues: Photosystem II reaction center protein L (38 aa).

A helical membrane pass occupies residues 17 to 37 (SLYWGLLLIFVLAVLFSNYFF).

Belongs to the PsbL family. In terms of assembly, PSII is composed of 1 copy each of membrane proteins PsbA, PsbB, PsbC, PsbD, PsbE, PsbF, PsbH, PsbI, PsbJ, PsbK, PsbL, PsbM, PsbT, PsbX, PsbY, PsbZ, Psb30/Ycf12, at least 3 peripheral proteins of the oxygen-evolving complex and a large number of cofactors. It forms dimeric complexes.

Its subcellular location is the plastid. The protein localises to the chloroplast thylakoid membrane. Functionally, one of the components of the core complex of photosystem II (PSII). PSII is a light-driven water:plastoquinone oxidoreductase that uses light energy to abstract electrons from H(2)O, generating O(2) and a proton gradient subsequently used for ATP formation. It consists of a core antenna complex that captures photons, and an electron transfer chain that converts photonic excitation into a charge separation. This subunit is found at the monomer-monomer interface and is required for correct PSII assembly and/or dimerization. The protein is Photosystem II reaction center protein L of Gnetum gnemon (Spanish joint-fir).